The chain runs to 1488 residues: Chromosome partition protein MukB (1488 aa).

Gly34 to Ser41 lines the ATP pocket. 3 coiled-coil regions span residues Leu326–Gln418, Leu444–His472, and Arg509–Pro602. Residues Pro666–Arg783 form a flexible hinge region. Coiled-coil stretches lie at residues Glu835–Glu923, Glu977–Gly1116, and Val1209–Val1265. Residues Ala1049 to Arg1074 form a disordered region. The segment covering Ser1051 to His1065 has biased composition (basic and acidic residues).

It belongs to the SMC family. MukB subfamily. As to quaternary structure, homodimerization via its hinge domain. Binds to DNA via its C-terminal region. Interacts, and probably forms a ternary complex, with MukE and MukF via its C-terminal region. The complex formation is stimulated by calcium or magnesium. Interacts with tubulin-related protein FtsZ.

Its subcellular location is the cytoplasm. The protein resides in the nucleoid. Functionally, plays a central role in chromosome condensation, segregation and cell cycle progression. Functions as a homodimer, which is essential for chromosome partition. Involved in negative DNA supercoiling in vivo, and by this means organize and compact chromosomes. May achieve or facilitate chromosome segregation by condensation DNA from both sides of a centrally located replisome during cell division. This is Chromosome partition protein MukB from Salmonella agona (strain SL483).